A 475-amino-acid polypeptide reads, in one-letter code: Ribulose bisphosphate carboxylase large chain (475 aa).

Positions 1-2 (MS) are excised as a propeptide. N-acetylproline is present on Pro-3. An N6,N6,N6-trimethyllysine modification is found at Lys-14. Positions 123 and 173 each coordinate substrate. Catalysis depends on Lys-175, which acts as the Proton acceptor. Lys-177 serves as a coordination point for substrate. Residues Lys-201, Asp-203, and Glu-204 each coordinate Mg(2+). Lys-201 carries the N6-carboxylysine modification. Residue His-294 is the Proton acceptor of the active site. The substrate site is built by Arg-295, His-327, and Ser-379.

It belongs to the RuBisCO large chain family. Type I subfamily. As to quaternary structure, heterohexadecamer of 8 large chains and 8 small chains; disulfide-linked. The disulfide link is formed within the large subunit homodimers. Mg(2+) is required as a cofactor. The disulfide bond which can form in the large chain dimeric partners within the hexadecamer appears to be associated with oxidative stress and protein turnover.

It is found in the plastid. The protein resides in the chloroplast. It carries out the reaction 2 (2R)-3-phosphoglycerate + 2 H(+) = D-ribulose 1,5-bisphosphate + CO2 + H2O. The catalysed reaction is D-ribulose 1,5-bisphosphate + O2 = 2-phosphoglycolate + (2R)-3-phosphoglycerate + 2 H(+). RuBisCO catalyzes two reactions: the carboxylation of D-ribulose 1,5-bisphosphate, the primary event in carbon dioxide fixation, as well as the oxidative fragmentation of the pentose substrate in the photorespiration process. Both reactions occur simultaneously and in competition at the same active site. The chain is Ribulose bisphosphate carboxylase large chain from Platanus occidentalis (Sycamore).